A 264-amino-acid chain; its full sequence is Type III pantothenate kinase (264 aa).

6-13 (DIGNTQTV) contributes to the ATP binding site. Substrate-binding positions include tyrosine 100 and 107–110 (GADR). Aspartate 109 (proton acceptor) is an active-site residue. Aspartate 129 lines the K(+) pocket. Threonine 132 is a binding site for ATP. Residue threonine 185 participates in substrate binding.

Belongs to the type III pantothenate kinase family. As to quaternary structure, homodimer. Requires NH4(+) as cofactor. The cofactor is K(+).

Its subcellular location is the cytoplasm. The catalysed reaction is (R)-pantothenate + ATP = (R)-4'-phosphopantothenate + ADP + H(+). Its pathway is cofactor biosynthesis; coenzyme A biosynthesis; CoA from (R)-pantothenate: step 1/5. Catalyzes the phosphorylation of pantothenate (Pan), the first step in CoA biosynthesis. This is Type III pantothenate kinase from Rubrobacter xylanophilus (strain DSM 9941 / JCM 11954 / NBRC 16129 / PRD-1).